A 338-amino-acid polypeptide reads, in one-letter code: Penicillin V acylase (338 aa).

Positions 1–3 (MLG) are cleaved as a propeptide — removed in mature form. The active-site Nucleophile is the C4.

The protein belongs to the peptidase C59 family. As to quaternary structure, homotetramer. Expressed as an inactive precursor that is cleaved autocatalytically at Gly-3/Cys-4 to generate an active enzyme. Processing exposes a catalytic N-terminal nucleophile residue with a free alpha amino group.

It carries out the reaction a penicillin + H2O = 6-aminopenicillanate + a carboxylate. Its activity is regulated as follows. Hydrolase activity is rapidly inhibited by lysine modifying reagents. In terms of biological role, catalyzes the hydrolysis of penicillin V to 6-aminopenicillanate (6-APA). Exhibits high specificity for penicillin V. Penicillin G and other related compounds are hydrolyzed at less than 10% of the rate of penicillin V. Among the cephalosporins, cephalosporin C is resistant to cleavage, whereas cephalosporin G is cleaved at about 1% of the rate of cleavage of penicillin V. This Lysinibacillus sphaericus (Bacillus sphaericus) protein is Penicillin V acylase.